The following is a 456-amino-acid chain: ATP synthase subunit beta 1 (456 aa).

152-159 (GGAGVGKS) serves as a coordination point for ATP.

This sequence belongs to the ATPase alpha/beta chains family. F-type ATPases have 2 components, CF(1) - the catalytic core - and CF(0) - the membrane proton channel. CF(1) has five subunits: alpha(3), beta(3), gamma(1), delta(1), epsilon(1). CF(0) has three main subunits: a(1), b(2) and c(9-12). The alpha and beta chains form an alternating ring which encloses part of the gamma chain. CF(1) is attached to CF(0) by a central stalk formed by the gamma and epsilon chains, while a peripheral stalk is formed by the delta and b chains.

It is found in the cell membrane. The enzyme catalyses ATP + H2O + 4 H(+)(in) = ADP + phosphate + 5 H(+)(out). Its function is as follows. Produces ATP from ADP in the presence of a proton gradient across the membrane. The catalytic sites are hosted primarily by the beta subunits. The protein is ATP synthase subunit beta 1 of Listeria monocytogenes serotype 4b (strain F2365).